The primary structure comprises 216 residues: UPF0301 protein BBta_6966 (216 aa).

It belongs to the UPF0301 (AlgH) family.

The chain is UPF0301 protein BBta_6966 from Bradyrhizobium sp. (strain BTAi1 / ATCC BAA-1182).